The chain runs to 1066 residues: Beta-galactosidase (1066 aa).

Substrate is bound by residues Asn-110 and Asp-209. Residue Asp-209 participates in Na(+) binding. Mg(2+)-binding residues include Glu-432, His-434, and Glu-477. Substrate-binding positions include Glu-477 and Glu-553 to His-556. Glu-477 acts as the Proton donor in catalysis. The active-site Nucleophile is the Glu-553. Residue Asn-613 participates in Mg(2+) binding. Residues Phe-617 and Asn-620 each contribute to the Na(+) site. Substrate contacts are provided by Asn-620 and Trp-1041.

This sequence belongs to the glycosyl hydrolase 2 family. In terms of assembly, homotetramer. The cofactor is Mg(2+). Requires Na(+) as cofactor.

It carries out the reaction Hydrolysis of terminal non-reducing beta-D-galactose residues in beta-D-galactosides.. The protein is Beta-galactosidase of Yersinia pseudotuberculosis serotype IB (strain PB1/+).